The sequence spans 464 residues: Fumarate hydratase class II 1 (464 aa).

Substrate contacts are provided by residues 96–98 (SGT), 127–130 (HPND), 137–139 (SSN), and Thr-185. His-186 serves as the catalytic Proton donor/acceptor. The active site involves Ser-316. Substrate is bound by residues Ser-317 and 322–324 (KVN).

This sequence belongs to the class-II fumarase/aspartase family. Fumarase subfamily. Homotetramer.

It localises to the cytoplasm. The catalysed reaction is (S)-malate = fumarate + H2O. It functions in the pathway carbohydrate metabolism; tricarboxylic acid cycle; (S)-malate from fumarate: step 1/1. Its function is as follows. Involved in the TCA cycle. Catalyzes the stereospecific interconversion of fumarate to L-malate. This chain is Fumarate hydratase class II 1, found in Pseudomonas aeruginosa (strain ATCC 15692 / DSM 22644 / CIP 104116 / JCM 14847 / LMG 12228 / 1C / PRS 101 / PAO1).